The chain runs to 609 residues: Autophagy-related protein 22-1 (609 aa).

The next 4 helical transmembrane spans lie at 95–115 (YYAG…GVEI), 117–137 (TASF…ILII), 151–171 (LLLV…LGVV), and 176–196 (MVGA…FVLL). The disordered stretch occupies residues 214–238 (AREPPPALDGSRAQEGHSDTTNDID). Basic and acidic residues predominate over residues 225–238 (RAQEGHSDTTNDID). A glycan (N-linked (GlcNAc...) asparagine) is linked at Asn244. Residues 287–307 (IGIGYIGAIILQIVCILVVIA) form a helical membrane-spanning segment. A glycan (N-linked (GlcNAc...) asparagine) is linked at Asn309. The next 3 helical transmembrane spans lie at 317 to 337 (LVLF…ALWL), 381 to 401 (ILLF…VSGT), and 415 to 435 (AALG…AFSW). An N-linked (GlcNAc...) asparagine glycan is attached at Asn443. The next 4 helical transmembrane spans lie at 450–470 (IIAC…GFIP), 487–509 (FPLG…SFFG), 522–542 (ALYA…VGII), and 552–572 (AFVF…LVDV).

This sequence belongs to the ATG22 family.

It localises to the vacuole membrane. Vacuolar effluxer which mediate the efflux of amino acids resulting from autophagic degradation. The release of autophagic amino acids allows the maintenance of protein synthesis and viability during nitrogen starvation. The polypeptide is Autophagy-related protein 22-1 (atg22-1) (Neosartorya fischeri (strain ATCC 1020 / DSM 3700 / CBS 544.65 / FGSC A1164 / JCM 1740 / NRRL 181 / WB 181) (Aspergillus fischerianus)).